The chain runs to 353 residues: Inactive ubiquitin thioesterase OTULINL (353 aa).

The interval 1–80 (MKATRSAPRE…KWWIGYLQRK (80 aa)) is required for membrane binding. The OTU domain occupies 125–353 (KCVRPVKRDN…NDHQYHIPVF (229 aa)).

The protein belongs to the peptidase C65 family. Otulin subfamily. In terms of assembly, does not bind ubiquitin or ubiquitin-like proteins.

Its subcellular location is the cytoplasm. It localises to the endoplasmic reticulum membrane. The protein resides in the nucleus envelope. Functionally, lacks deubiquitinase activity. The sequence is that of Inactive ubiquitin thioesterase OTULINL from Rattus norvegicus (Rat).